The primary structure comprises 447 residues: MAQTDILLTKEPAPQTVPACQLPRKLYDVARNTGAHTSSGLATSGFRTAKYLLDEWFQNCYARYHQAFADRDQSERQRHESQQLAAETEALAQRTQQDSTRKVGERLQDMHGWKSELQRQVEELVSETELLLAQKQRLERALDATAGPFSIVTDNLQCRERRQHPDLVRDCVEIELLKEAELIRNIQELLKRTIKQAVSQIRLNWEHKETCEMDWSDKVEAYNIDEACCRYNNQSTDVQFYPHSAKFEESASTPETWAKFTQEHLYRAERERLASVNLRNLIDCILQDTSEDLRLQCDAVNLAFGRRCEELEDARHKLEHHLRKTLREISDQEHNIAALKQAIKDKEAPLKVAQTRLYQRSHRPNVELCRDAAQFRLASEVEELNLSLAALKEKLLEAEQSLRNLEDTRMSLEKDIAIKTNSLFIDRHKCMAHRAHYPTVLQLAGYQ.

Coiled coils occupy residues 69-144 and 304-423; these read ADRD…ALDA and FGRR…TNSL. The span at 72–81 shows a compositional bias: basic and acidic residues; it reads DQSERQRHES. Residues 72–104 are disordered; it reads DQSERQRHESQQLAAETEALAQRTQQDSTRKVG. A compositionally biased stretch (low complexity) spans 82–97; that stretch reads QQLAAETEALAQRTQQ.

Belongs to the tektin family. Microtubule inner protein component of sperm flagellar doublet microtubules. In terms of processing, ubiquitinated, leading to its degradation. Deubiquitinated by USP16, promoting its stability. As to expression, expressed in trachea multiciliated cells.

It is found in the cytoplasm. The protein resides in the cytoskeleton. The protein localises to the cilium axoneme. It localises to the flagellum axoneme. Its function is as follows. Microtubule inner protein (MIP) part of the dynein-decorated doublet microtubules (DMTs) in cilia and flagellar axoneme. Forms filamentous polymers in the walls of ciliary and flagellar microtubules. Contributes to normal sperm motility. This Bos taurus (Bovine) protein is Tektin-4 (TEKT4).